Here is a 315-residue protein sequence, read N- to C-terminus: Voltage-dependent calcium channel gamma-3 subunit (315 aa).

4 helical membrane-spanning segments follow: residues 8–28 (IQMLITTVGAFAAFSLMTIAV), 104–124 (SSVFPILSVTLLFFGGLCVAA), 135–155 (ILSAGIFFVSAGLSNIIGIIV), and 181–201 (FGAFSFIIAEIVGVVAVHIYI). Phosphoserine is present on Ser248.

This sequence belongs to the PMP-22/EMP/MP20 family. CACNG subfamily. In terms of assembly, the L-type calcium channel is composed of five subunits: alpha-1, alpha-2/delta, beta and gamma. Acts as an auxiliary subunit for AMPA-selective glutamate receptors (AMPARs). Found in a complex with GRIA1, GRIA2, GRIA3, GRIA4, CNIH2, CNIH3, CACNG2, CACNG4, CACNG5, CACNG7 and CACNG8. Interacts with AP4M1 and GRIA1; associates GRIA1 with the adaptor protein complex 4 (AP-4) to target GRIA1 to the somatodendritic compartment of neurons.

Its subcellular location is the membrane. Its function is as follows. Regulates the trafficking to the somatodendritic compartment and gating properties of AMPA-selective glutamate receptors (AMPARs). Promotes their targeting to the cell membrane and synapses and modulates their gating properties by slowing their rates of activation, deactivation and desensitization. Does not show subunit-specific AMPA receptor regulation and regulates all AMPAR subunits. Thought to stabilize the calcium channel in an inactivated (closed) state. The protein is Voltage-dependent calcium channel gamma-3 subunit (CACNG3) of Homo sapiens (Human).